Here is a 108-residue protein sequence, read N- to C-terminus: Zinc metalloproteinase/disintegrin (108 aa).

The Peptidase M12B domain occupies 1 to 19; sequence NEYQTYLTDRNPQCILNEP. The propeptide occupies 20 to 35; that stretch reads LRTDTVSTPVSGNELL. The region spanning 27 to 108 is the Disintegrin domain; the sequence is TPVSGNELLE…ADCPRNGFYG (82 aa). 6 disulfide bridges follow: C41–C56, C43–C51, C50–C73, C64–C70, C69–C94, and C82–C101. The Cell attachment site; atypical (KGD) signature appears at 86–88; it reads KGD.

Belongs to the venom metalloproteinase (M12B) family. P-II subfamily. P-IIa sub-subfamily. As to quaternary structure, monomeric (disintegrin). Zn(2+) serves as cofactor. Expressed by the venom gland.

It is found in the secreted. In terms of biological role, impairs hemostasis in the envenomed animal. Its function is as follows. Inhibits platelet aggregation induced by ADP, thrombin, platelet-activating factor and collagen. Acts by inhibiting fibrinogen interaction with platelet receptors GPIIb/GPIIIa (ITGA2B/ITGB3). In Gloydius brevicauda (Korean slamosa snake), this protein is Zinc metalloproteinase/disintegrin.